Reading from the N-terminus, the 342-residue chain is UDP-glucuronic acid decarboxylase 3 (342 aa).

The span at 1–11 (MAATSEKQNTT) shows a compositional bias: polar residues. The tract at residues 1–22 (MAATSEKQNTTKPPPSPSPLRN) is disordered. Position 61 to 86 (61 to 86 (DNYFTGSKENLKKWIGHPRFELIRHD)) interacts with NAD(+). Arg-170 is a substrate binding site. Tyr-173 acts as the Proton acceptor in catalysis. 173–177 (YDEGK) provides a ligand contact to NAD(+). Asn-202 lines the substrate pocket. Arg-214 provides a ligand contact to NAD(+). Substrate-binding positions include 215-219 (VVSNF), 232-239 (QKPGTQTR), and 299-303 (DPRQR).

The protein belongs to the NAD(P)-dependent epimerase/dehydratase family. UDP-glucuronic acid decarboxylase subfamily. The cofactor is NAD(+). In terms of tissue distribution, ubiquitous.

The protein localises to the cytoplasm. The enzyme catalyses UDP-alpha-D-glucuronate + H(+) = UDP-alpha-D-xylose + CO2. Its pathway is nucleotide-sugar biosynthesis; UDP-alpha-D-xylose biosynthesis; UDP-alpha-D-xylose from UDP-alpha-D-glucuronate: step 1/1. In terms of biological role, catalyzes the NAD-dependent decarboxylation of UDP-glucuronic acid to UDP-xylose. Necessary for the biosynthesis of the core tetrasaccharide in glycosaminoglycan biosynthesis. The sequence is that of UDP-glucuronic acid decarboxylase 3 (UXS3) from Arabidopsis thaliana (Mouse-ear cress).